A 600-amino-acid chain; its full sequence is Elongation factor 4 (600 aa).

Positions 4–187 (KYIRNFSIVA…AIIEQIPPPL (184 aa)) constitute a tr-type G domain. Residues 16–21 (DHGKST) and 134–137 (NKID) each bind GTP.

This sequence belongs to the TRAFAC class translation factor GTPase superfamily. Classic translation factor GTPase family. LepA subfamily.

Its subcellular location is the cell membrane. The catalysed reaction is GTP + H2O = GDP + phosphate + H(+). Required for accurate and efficient protein synthesis under certain stress conditions. May act as a fidelity factor of the translation reaction, by catalyzing a one-codon backward translocation of tRNAs on improperly translocated ribosomes. Back-translocation proceeds from a post-translocation (POST) complex to a pre-translocation (PRE) complex, thus giving elongation factor G a second chance to translocate the tRNAs correctly. Binds to ribosomes in a GTP-dependent manner. The polypeptide is Elongation factor 4 (Malacoplasma penetrans (strain HF-2) (Mycoplasma penetrans)).